Here is a 202-residue protein sequence, read N- to C-terminus: Small ribosomal subunit protein uS5 (202 aa).

Over residues 1-13 (MPGQQRRGGGSGG) the composition is skewed to gly residues. Residues 1–31 (MPGQQRRGGGSGGSDRRERRDRSGSGPAQEK) form a disordered region. The segment covering 14–23 (SDRRERRDRS) has biased composition (basic and acidic residues). The 64-residue stretch at 34-97 (YVERVVAINR…EEAKKHFFKV (64 aa)) folds into the S5 DRBM domain.

The protein belongs to the universal ribosomal protein uS5 family. Part of the 30S ribosomal subunit. Contacts proteins S4 and S8.

With S4 and S12 plays an important role in translational accuracy. Its function is as follows. Located at the back of the 30S subunit body where it stabilizes the conformation of the head with respect to the body. This chain is Small ribosomal subunit protein uS5, found in Frankia casuarinae (strain DSM 45818 / CECT 9043 / HFP020203 / CcI3).